The sequence spans 241 residues: MAAESSNPRTVEEIFKDFSGRRSGFLRALSVDVDKFYSLCDPEMENLCLYGHPNGTWEVNLPAEEVPPELPEPALGINFARDGMQRKDWLSLVAVHSDCWLLSVSSYFGARLNRNERKRLFSLINDLPTLFEVVTGRKPIKDGKPSMDLGSKSRNGVKRSIEGQTKSTPKLMEESYEDEDDEHGDTLCGSCGGNYTNDEFWICCDVCERWYHGKCVKITPAKAESIKQYKCPSCCTKKGRQ.

Ala-2 is modified (N-acetylalanine). A disordered region spans residues 142–182; sequence DGKPSMDLGSKSRNGVKRSIEGQTKSTPKLMEESYEDEDDE. Residues 185–237 form a PHD-type zinc finger; the sequence is DTLCGSCGGNYTNDEFWICCDVCERWYHGKCVKITPAKAESIKQYKCPSCCTK.

Belongs to the Alfin family. Interacts with H3K4me3 and to a lesser extent with H3K4me2. In terms of tissue distribution, ubiquitously expressed.

It is found in the nucleus. Its function is as follows. Histone-binding component that specifically recognizes H3 tails trimethylated on 'Lys-4' (H3K4me3), which mark transcription start sites of virtually all active genes. In Arabidopsis thaliana (Mouse-ear cress), this protein is PHD finger protein ALFIN-LIKE 1 (AL1).